A 365-amino-acid chain; its full sequence is 2-aminoethylphosphonate--pyruvate transaminase (365 aa).

K194 carries the N6-(pyridoxal phosphate)lysine modification.

It belongs to the class-V pyridoxal-phosphate-dependent aminotransferase family. PhnW subfamily. Homodimer. Pyridoxal 5'-phosphate is required as a cofactor.

It catalyses the reaction (2-aminoethyl)phosphonate + pyruvate = phosphonoacetaldehyde + L-alanine. Its function is as follows. Involved in phosphonate degradation. The protein is 2-aminoethylphosphonate--pyruvate transaminase of Bacillus mycoides (strain KBAB4) (Bacillus weihenstephanensis).